A 360-amino-acid chain; its full sequence is DNA replication and repair protein RecF (360 aa).

30–37 provides a ligand contact to ATP; that stretch reads GQNGSGKT.

It belongs to the RecF family.

The protein localises to the cytoplasm. Functionally, the RecF protein is involved in DNA metabolism; it is required for DNA replication and normal SOS inducibility. RecF binds preferentially to single-stranded, linear DNA. It also seems to bind ATP. The protein is DNA replication and repair protein RecF of Shewanella sp. (strain MR-7).